Here is a 1405-residue protein sequence, read N- to C-terminus: Centlein (1405 aa).

The span at 1–14 shows a compositional bias: pro residues; that stretch reads MAARSPPSPHPSPP. Positions 1-79 are disordered; the sequence is MAARSPPSPH…GGAAPAHAPL (79 aa). N-acetylalanine is present on Ala-2. Phosphoserine occurs at positions 5 and 22. A compositionally biased stretch (basic and acidic residues) spans 48 to 58; the sequence is VVADESDKIWV. Positions 61-71 are enriched in gly residues; the sequence is EGSGGRRGPGG. The stretch at 95–126 forms a coiled coil; sequence EEAMVTRTQLLEEELSSLKEELALCQADKEFV. Disordered stretches follow at residues 421–450 and 493–529; these read KLKE…QVPH and SRKS…EELQ. Coiled coils occupy residues 613–655 and 681–793; these read NELA…ELNR and KNGK…ELIN. Positions 865–917 are disordered; it reads WEDVSESSSDSEAQTSQTLGTIIVETSQKISPTEDGKDQKESDPTEDSQTQGK. The segment covering 877 to 895 has biased composition (polar residues); that stretch reads AQTSQTLGTIIVETSQKIS. Residues 896–907 show a composition bias toward basic and acidic residues; it reads PTEDGKDQKESD. The stretch at 980–1311 forms a coiled coil; sequence NIILLRERII…IRELKKMKKN (332 aa). Residue Thr-1343 is modified to Phosphothreonine.

As to quaternary structure, interacts with CEP250 and CEP68. Interacts with NEK2; the interaction leads to phosphorylation of CNTLN. In terms of processing, phosphorylated directly or indirectly by NEK2.

The protein resides in the cytoplasm. The protein localises to the cytoskeleton. It localises to the microtubule organizing center. It is found in the centrosome. Its subcellular location is the centriole. Required for centrosome cohesion and recruitment of CEP68 to centrosomes. The chain is Centlein (CNTLN) from Homo sapiens (Human).